Here is a 149-residue protein sequence, read N- to C-terminus: GATA transcription factor 15 (149 aa).

Residues 1–10 (MLDPTEKVID) are compositionally biased toward basic and acidic residues. Disordered regions lie at residues 1 to 41 (MLDP…NEKK) and 76 to 102 (RRTLISNRSEDKKKKSHNRNPKFGDSL). The GATA-type zinc-finger motif lies at 37-91 (SNEKKSCAICGTSKTPLWRGGPAGPKSLCNACGIRNRKKRRTLISNRSEDKKKKS).

It belongs to the type IV zinc-finger family. Class B subfamily.

It localises to the nucleus. In terms of biological role, transcriptional regulator that specifically binds 5'-GATA-3' or 5'-GAT-3' motifs within gene promoters. The sequence is that of GATA transcription factor 15 (GATA15) from Arabidopsis thaliana (Mouse-ear cress).